The chain runs to 1255 residues: Receptor tyrosine-protein kinase erbB-2 (1255 aa).

Positions 1–22 (MELAALCRWGLLLALLPPGAAS) are cleaved as a signal peptide. At 23-652 (TQVCTGTDMK…PAEQRASPLT (630 aa)) the chain is on the extracellular side. C26 and C53 are disulfide-bonded. N-linked (GlcNAc...) asparagine glycosylation is found at N68 and N124. Intrachain disulfides connect C162/C192, C195/C204, C199/C212, C220/C227, C224/C235, C236/C244, C240/C252, C255/C264, C268/C295, C299/C311, C315/C331, C334/C338, C342/C367, C475/C504, C511/C520, and C515/C528. A Phosphothreonine modification is found at T182. N-linked (GlcNAc...) asparagine glycosylation occurs at N187. N259 is a glycosylation site (N-linked (GlcNAc...) asparagine). N530 carries an N-linked (GlcNAc...) asparagine glycan. 8 disulfide bridges follow: C531/C540, C544/C560, C563/C576, C567/C584, C587/C596, C600/C623, C626/C634, and C630/C642. N571 carries an N-linked (GlcNAc...) asparagine glycan. The N-linked (GlcNAc...) asparagine glycan is linked to N629. A helical membrane pass occupies residues 653-675 (SIISAVVGILLVVVLGVVFGILI). The required for interaction with KPNB1 and EEA1 stretch occupies residues 676–689 (KRRQQKIRKYTMRR). The Nuclear localization signal motif lies at 676–689 (KRRQQKIRKYTMRR). Over 676–1255 (KRRQQKIRKY…PEYLGLDVPV (580 aa)) the chain is Cytoplasmic. The Protein kinase domain occupies 720-987 (LRKVKVLGSG…RMARDPQRFV (268 aa)). ATP contacts are provided by residues 726 to 734 (LGSGAFGTV) and K753. D845 (proton acceptor) is an active-site residue. The residue at position 877 (Y877) is a Phosphotyrosine. Disordered stretches follow at residues 1035–1179 (PAPG…GKNG) and 1196–1255 (YLTP…DVPV). A phosphoserine mark is found at S1054, S1078, S1083, and S1107. Phosphotyrosine occurs at positions 1112 and 1139. The segment covering 1146–1155 (RPQPPSPREG) has biased composition (pro residues). A Phosphoserine modification is found at S1151. T1166 is modified (phosphothreonine). Residues 1195–1197 (EYL) are interaction with PIK3C2B. A Phosphotyrosine modification is found at Y1196. The residue at position 1248 (Y1248) is a Phosphotyrosine; by autocatalysis.

It belongs to the protein kinase superfamily. Tyr protein kinase family. EGF receptor subfamily. In terms of assembly, homodimer. Heterodimer with EGFR, ERBB3 and ERBB4. Part of a complex with EGFR and either PIK3C2A or PIK3C2B. May interact with PIK3C2B when phosphorylated on Tyr-1196. Interacts with PLXNB1. Interacts (when phosphorylated on Tyr-1248) with MEMO1. Interacts with MUC1; the interaction is enhanced by heregulin (HRG). Interacts (when phosphorylated on Tyr-1139) with GRB7 (via SH2 domain). Interacts (when phosphorylated on Tyr-1248) with ERBIN. Interacts with KPNB1, RANBP2, EEA1, CRM1 and CLTC. Interacts with PTK6. Interacts with RPA194 and ACTB. Interacts with PRKCABP, SRC and MYOC. Interacts (preferentially with the tyrosine phosphorylated form) with CPNE3; this interaction occurs at the cell membrane and is increased in a growth factor heregulin-dependent manner. Interacts with HSP90AA1 and HSP90AB1 in an ATP-dependent manner; the interaction suppresses ERBB2 kinase activity. Interacts with SORL1; this interaction regulates ERBB2 subcellular distribution by promoting its recycling after internalization from endosomes back to the plasma membrane, hence stimulates ERBB2-mediated signaling. Interacts with SH3BGRL. Interacts with ROR1. Post-translationally, autophosphorylated. Autophosphorylation occurs in trans, i.e. one subunit of the dimeric receptor phosphorylates tyrosine residues on the other subunit. Ligand-binding increases phosphorylation on tyrosine residues. Signaling via SEMA4C promotes phosphorylation at Tyr-1248. Dephosphorylated by PTPN12. In terms of tissue distribution, expressed in a variety of tumor tissues including primary breast tumors and tumors from small bowel, esophagus, kidney and mouth.

Its subcellular location is the cell membrane. The protein resides in the cell projection. It localises to the ruffle membrane. The protein localises to the early endosome. It is found in the cytoplasm. Its subcellular location is the perinuclear region. The protein resides in the nucleus. The catalysed reaction is L-tyrosyl-[protein] + ATP = O-phospho-L-tyrosyl-[protein] + ADP + H(+). Activated by dimerization. Not activated by EGF, TGF-alpha and amphiregulin. Interaction with PTK6 increases its intrinsic kinase activity. In terms of biological role, protein tyrosine kinase that is part of several cell surface receptor complexes, but that apparently needs a coreceptor for ligand binding. Essential component of a neuregulin-receptor complex, although neuregulins do not interact with it alone. GP30 is a potential ligand for this receptor. Regulates outgrowth and stabilization of peripheral microtubules (MTs). Upon ERBB2 activation, the MEMO1-RHOA-DIAPH1 signaling pathway elicits the phosphorylation and thus the inhibition of GSK3B at cell membrane. This prevents the phosphorylation of APC and CLASP2, allowing its association with the cell membrane. In turn, membrane-bound APC allows the localization of MACF1 to the cell membrane, which is required for microtubule capture and stabilization. In the nucleus is involved in transcriptional regulation. Associates with the 5'-TCAAATTC-3' sequence in the PTGS2/COX-2 promoter and activates its transcription. Implicated in transcriptional activation of CDKN1A; the function involves STAT3 and SRC. Involved in the transcription of rRNA genes by RNA Pol I and enhances protein synthesis and cell growth. The polypeptide is Receptor tyrosine-protein kinase erbB-2 (ERBB2) (Homo sapiens (Human)).